Consider the following 588-residue polypeptide: Disabled homolog 1 (588 aa).

The interval 1–26 (MSTETELQVAVKTSAKKDSRKKGQDR) is disordered. Residues 15 to 26 (AKKDSRKKGQDR) are compositionally biased toward basic and acidic residues. One can recognise a PID domain in the interval 36 to 189 (KGEGVRYKAK…CEQAVYQTIL (154 aa)). Residues Tyr-198, Tyr-220, and Tyr-232 each carry the phosphotyrosine modification. 4 disordered regions span residues 224-243 (TSQKKEGVYDVPKSQPNSQP), 420-444 (LATVPGTNDSARSSPQSDKPRQKMG), 451-470 (FQMVQPPPVPSRKPDQPSLT), and 502-588 (LTPV…QDGS). Residues 424–436 (PGTNDSARSSPQS) are compositionally biased toward polar residues. Composition is skewed to low complexity over residues 503 to 512 (TPVTSTTPST) and 523 to 534 (SSPSKSSASHVS). Ser-524 carries the phosphoserine; by CDK5 modification. The span at 537–546 (TADDIFEEGF) shows a compositional bias: acidic residues.

Associates with the SH2 domains of SRC, FYN and ABL. Interacts (phosphorylated on tyrosine residues) with CRK and CRKL (via respective SH2 domain). Interacts with SIAH1, LRP8 and VLDLR. Interacts with LRP1. Interacts with APLP1 (via NPXY motif). Interacts with DAB2IP. Interacts with ZSWIM8. Post-translationally, phosphorylated by FYN on Tyr-198 and Tyr-220 upon reelin induction in embryonic neurons. Also found phosphorylated on Tyr-232 upon reelin induction. Also phosphorylated on Ser-524 independently of reelin signaling. In terms of processing, ubiquitinated by various cullin-5-RING E3 ubiquitin-protein ligase complexes (ECS complexes) following ligand-binding and phosphorylation, leading to its degradation. Ubiquitinated by the ECS(SOCS7) complex in the cortical plate of the developing cerebral cortex following ligand-binding and phosphorylation by FYN, leading to its degradation by the proteasome. Recognized by ZSWIM8 through a disorder targets misorder mechanism that eliminates misfolded DAB1 via ubiquitination and proteasomal degradation. Expressed mainly in brain. Specifically expressin in cortical neurons.

Its subcellular location is the cytoplasm. Functionally, signaling adapter of the reelin-mediated signaling pathway, which regulates the migration and differentiation of postmitotic neurons during brain development. Mediates intracellular transduction of Reelin signaling following reelin (RELN)-binding to its receptor: acts by docking proteins through its phosphotyrosine residues and PID domain. The polypeptide is Disabled homolog 1 (Mus musculus (Mouse)).